The following is a 205-amino-acid chain: MARGPRYKVPFRRRREGLTNYRKRRKLLLSKKPRLVVRKTNKHIIAQVVVAKPQGDVTIVGIDTRALAKFGWKGDENNTPAAYLLGLIVGYKARIRGVKEAVLDIGLHRPVAGSRVFAVLKGALDAGLEIPHGEEIIPSDDRISGKHIAEYAEKLKKENPELYKTRFSRYLQRGLAPEELPTHFEEVKKKIIEYYEGKLAKAIAQ.

Belongs to the universal ribosomal protein uL18 family. As to quaternary structure, part of the 50S ribosomal subunit. Contacts the 5S and 23S rRNAs.

This is one of the proteins that bind and probably mediate the attachment of the 5S RNA into the large ribosomal subunit, where it forms part of the central protuberance. This Pyrobaculum islandicum (strain DSM 4184 / JCM 9189 / GEO3) protein is Large ribosomal subunit protein uL18.